The chain runs to 496 residues: Cytochrome P450 71D178 (496 aa).

A helical; Signal-anchor for type II membrane protein membrane pass occupies residues 1–21 (MDISISWVVIILLVLSYLILM). A heme-binding site is contributed by Cys-435.

It belongs to the cytochrome P450 family. The cofactor is heme. As to expression, expressed in flowers, leaves and stems, especially in glandular trichomes.

The protein localises to the membrane. It carries out the reaction (4S)-limonene + reduced [NADPH--hemoprotein reductase] + O2 = (1S,5R)-carveol + oxidized [NADPH--hemoprotein reductase] + H2O + H(+). It catalyses the reaction gamma-terpinene + 2 reduced [NADPH--hemoprotein reductase] + 2 O2 = carvacrol + 2 oxidized [NADPH--hemoprotein reductase] + 3 H2O + 2 H(+). The enzyme catalyses gamma-terpinene + 2 reduced [NADPH--hemoprotein reductase] + 2 O2 = thymol + 2 oxidized [NADPH--hemoprotein reductase] + 3 H2O + 2 H(+). The catalysed reaction is (4R)-limonene + reduced [NADPH--hemoprotein reductase] + O2 = (1R,6S)-isopiperitenol + oxidized [NADPH--hemoprotein reductase] + H2O + H(+). It participates in secondary metabolite biosynthesis; terpenoid biosynthesis. Its function is as follows. Involved in the biosynthesis of phenolic monoterpenes natural products thymol and carvacrol which have a broad range of biological activities acting as antimicrobial compounds, insecticides, antioxidants and pharmaceutical agents. Catalyzes the C2- and C3-hydroxylation of gamma-terpinene to produce carvacrol and thymol, respectively. Also mediates the C6-hydroxylation of (4S)-limonene to form carveol and the C3-hydroxylation of (4R)-limonene to generate (+)-trans-isopiperitenol. The chain is Cytochrome P450 71D178 from Origanum vulgare (Wild marjoram).